The chain runs to 281 residues: L-cysteine S-thiosulfotransferase subunit SoxA (281 aa).

The N-terminal stretch at 1 to 25 (MTKHGFLLATLVLAGATLPIGPVTA) is a signal peptide. A disulfide bond links Cys99 and Cys130. Positions 175 to 281 (AAYEQGKRFY…LELNGPGARK (107 aa)) constitute a Cytochrome c domain. Residues Cys195 and His199 each coordinate heme. Arg238 contributes to the substrate binding site. Heme is bound at residue Cys242. Cys242 serves as the catalytic Cysteine persulfide intermediate.

The protein belongs to the SoxA family. Heterodimer of SoxA and SoxX. The cofactor is heme. In terms of processing, cysteine persulfide at Cys-242.

It is found in the periplasm. The enzyme catalyses L-cysteinyl-[SoxY protein] + thiosulfate + 2 Fe(III)-[cytochrome c] = S-sulfosulfanyl-L-cysteinyl-[SoxY protein] + 2 Fe(II)-[cytochrome c] + 2 H(+). It catalyses the reaction S-sulfanyl-L-cysteinyl-[SoxY protein] + thiosulfate + 2 Fe(III)-[cytochrome c] = S-(2-sulfodisulfanyl)-L-cysteinyl-[SoxY protein] + 2 Fe(II)-[cytochrome c] + 2 H(+). In terms of biological role, C-type monoheme cytochrome, which is part of the SoxAX cytochrome complex involved in sulfur oxidation. The SoxAX complex catalyzes the formation of a heterodisulfide bond between the conserved cysteine residue on a sulfur carrier SoxYZ complex subunit SoxY and thiosulfate or other inorganic sulfur substrates. This leads to the intermediary formation of conspicuous sulfur globules inside of the cells. This chain is L-cysteine S-thiosulfotransferase subunit SoxA, found in Allochromatium vinosum (Chromatium vinosum).